A 311-amino-acid chain; its full sequence is Olfactory receptor 8B8 (311 aa).

Topologically, residues 1-25 (MAAENSSFVTQFILAGLTDQPGVQI) are extracellular. N-linked (GlcNAc...) asparagine glycosylation occurs at Asn5. Residues 26-46 (PLFFLFLGFYVVTVVGNLGLI) form a helical membrane-spanning segment. The Cytoplasmic portion of the chain corresponds to 47–54 (TLIRLNSH). The helical transmembrane segment at 55–75 (LHTPMYFFLYNLSFIDFCYSS) threads the bilayer. Residues 76–99 (VITPKMLMSFVLKKNSISYAGCMT) lie on the Extracellular side of the membrane. Cys97 and Cys189 are disulfide-bonded. A helical transmembrane segment spans residues 100-120 (QLFFFLFFVVSESFILSAMAY). At 121–139 (DRYVAICNPLLYMVTMSPQ) the chain is on the cytoplasmic side. The helical transmembrane segment at 140-160 (VCFLLLLGVYGMGFAGAMAHT) threads the bilayer. Residues 161-197 (ACMMGVTFCANNLVNHYMCDILPLLECACTSTYVNEL) lie on the Extracellular side of the membrane. Residues 198–217 (VVFVVVGIDIGVPTVTIFIS) traverse the membrane as a helical segment. The Cytoplasmic segment spans residues 218-237 (YALILSSIFHIDSTEGRSKA). Residues 238–258 (FSTCSSHIIAVSLFFGSGAFM) form a helical membrane-spanning segment. Over 259–271 (YLKPFSLLAMNQG) the chain is Extracellular. The chain crosses the membrane as a helical span at residues 272–292 (KVSSLFYTTVVPMLNPLIYSL). Topologically, residues 293–311 (RNKDVKVALKKILNKNAFS) are cytoplasmic.

Belongs to the G-protein coupled receptor 1 family. Expressed in the tongue and testis.

The protein resides in the cell membrane. Its function is as follows. Odorant receptor (Potential). May be involved in taste perception. The chain is Olfactory receptor 8B8 from Homo sapiens (Human).